The chain runs to 207 residues: Probable GTP-binding protein EngB (207 aa).

The EngB-type G domain occupies glycine 24–leucine 199. GTP is bound by residues glycine 32–serine 39, glycine 59–glutamine 63, aspartate 77–glycine 80, threonine 144–aspartate 147, and tyrosine 178–glycine 180. 2 residues coordinate Mg(2+): serine 39 and threonine 61.

It belongs to the TRAFAC class TrmE-Era-EngA-EngB-Septin-like GTPase superfamily. EngB GTPase family. Requires Mg(2+) as cofactor.

Necessary for normal cell division and for the maintenance of normal septation. The sequence is that of Probable GTP-binding protein EngB from Xanthomonas euvesicatoria pv. vesicatoria (strain 85-10) (Xanthomonas campestris pv. vesicatoria).